Reading from the N-terminus, the 311-residue chain is 4-hydroxy-tetrahydrodipicolinate synthase (311 aa).

Thr51 lines the pyruvate pocket. Residue Tyr140 is the Proton donor/acceptor of the active site. Residue Lys168 is the Schiff-base intermediate with substrate of the active site. Pyruvate is bound at residue Ile209.

Belongs to the DapA family. Homotetramer; dimer of dimers.

The protein resides in the cytoplasm. It catalyses the reaction L-aspartate 4-semialdehyde + pyruvate = (2S,4S)-4-hydroxy-2,3,4,5-tetrahydrodipicolinate + H2O + H(+). It participates in amino-acid biosynthesis; L-lysine biosynthesis via DAP pathway; (S)-tetrahydrodipicolinate from L-aspartate: step 3/4. Catalyzes the condensation of (S)-aspartate-beta-semialdehyde [(S)-ASA] and pyruvate to 4-hydroxy-tetrahydrodipicolinate (HTPA). This is 4-hydroxy-tetrahydrodipicolinate synthase from Streptococcus pneumoniae (strain Hungary19A-6).